Consider the following 617-residue polypeptide: Dopamine beta-hydroxylase (617 aa).

Residues methionine 1 to arginine 16 are Cytoplasmic-facing. A helical; Signal-anchor for type II membrane protein membrane pass occupies residues glutamate 17–leucine 37. The Intragranular portion of the chain corresponds to glutamine 38–glycine 617. The 117-residue stretch at glycine 57 to leucine 173 folds into the DOMON domain. Asparagine 64 is a glycosylation site (N-linked (GlcNAc...) asparagine). 6 disulfide bridges follow: cysteine 154–cysteine 596, cysteine 232–cysteine 283, cysteine 269–cysteine 295, cysteine 390–cysteine 503, cysteine 394–cysteine 565, and cysteine 466–cysteine 488. Asparagine 184 carries an N-linked (GlcNAc...) (complex) asparagine glycan. Tyrosine 230 is a catalytic residue. The Cu(2+) site is built by histidine 262 and histidine 263. Cu(2+) is bound at residue histidine 333. Residue asparagine 344 is glycosylated (N-linked (GlcNAc...) asparagine). Histidine 412 is a catalytic residue. Residues histidine 412, histidine 414, and methionine 487 each contribute to the Cu(2+) site. Asparagine 566 is a glycosylation site (N-linked (GlcNAc...) asparagine). The interval glutamate 590–glycine 617 is disordered.

The protein belongs to the copper type II ascorbate-dependent monooxygenase family. Homotetramer; composed of two disulfide-linked dimers. Cu(2+) serves as cofactor. In terms of processing, N-glycosylated. Post-translationally, proteolytic cleavage after the membrane-anchor leads to the release of the soluble form.

It is found in the cytoplasmic vesicle. It localises to the secretory vesicle lumen. The protein resides in the secretory vesicle. Its subcellular location is the chromaffin granule lumen. The protein localises to the secreted. It is found in the secretory vesicle membrane. It localises to the chromaffin granule membrane. It carries out the reaction dopamine + 2 L-ascorbate + O2 = (R)-noradrenaline + 2 monodehydro-L-ascorbate radical + H2O. Its pathway is catecholamine biosynthesis; (R)-noradrenaline biosynthesis; (R)-noradrenaline from dopamine: step 1/1. In terms of biological role, catalyzes the hydroxylation of dopamine to noradrenaline (also known as norepinephrine), and is thus vital for regulation of these neurotransmitters. This Homo sapiens (Human) protein is Dopamine beta-hydroxylase (DBH).